The following is a 487-amino-acid chain: ESCRT-I complex subunit vps23 (487 aa).

Residues 428 to 487 (SERELKYYELKRKDEKLDEGIRALNQALHHESIMPASWLKGIKLLARQQFLIRDEMLQYS) enclose the SB domain.

In terms of assembly, component of the ESCRT-I complex (endosomal sorting complex required for transport I).

The protein localises to the cytoplasm. Its subcellular location is the endosome. It localises to the late endosome membrane. Functionally, component of the ESCRT-I complex, a regulator of vesicular trafficking process. Binds to ubiquitinated cargo proteins and is required for the sorting of endocytic ubiquitinated cargos into multivesicular bodies (MVBs). Mediates the association to the ESCRT-0 complex. In Schizosaccharomyces pombe (strain 972 / ATCC 24843) (Fission yeast), this protein is ESCRT-I complex subunit vps23 (sst6).